The primary structure comprises 280 residues: Pantothenate synthetase (280 aa).

31–38 (MGNLHVGH) is an ATP binding site. The Proton donor role is filled by His-38. Gln-62 is a (R)-pantoate binding site. Gln-62 lines the beta-alanine pocket. 150–153 (GKKD) lines the ATP pocket. Position 156 (Gln-156) interacts with (R)-pantoate. ATP-binding positions include Val-179 and 187–190 (MSSR).

It belongs to the pantothenate synthetase family. As to quaternary structure, homodimer.

The protein localises to the cytoplasm. It catalyses the reaction (R)-pantoate + beta-alanine + ATP = (R)-pantothenate + AMP + diphosphate + H(+). It participates in cofactor biosynthesis; (R)-pantothenate biosynthesis; (R)-pantothenate from (R)-pantoate and beta-alanine: step 1/1. In terms of biological role, catalyzes the condensation of pantoate with beta-alanine in an ATP-dependent reaction via a pantoyl-adenylate intermediate. The sequence is that of Pantothenate synthetase from Xanthomonas oryzae pv. oryzae (strain KACC10331 / KXO85).